The following is a 212-amino-acid chain: MRVRNRKGATELLEANPQYVVLNPADAKGKWQELFGNDHPIHIEVGSGKGAFITGMAKANPNINYIGIDIQKSVLSYALDKVLATDVPNIKLLWVDGSDLTNYFADGEIERLYLNFSDPWPKKRHEKRRLTYKSFLDTFKQILPEKGEVHFKTDNRGLFEYSLVSFSQYGMKLKGVWLDLHASDFEGNVLTEYEQKFSSKGQVIYRVEAVFQ.

The S-adenosyl-L-methionine site is built by E44, D69, D96, and D118. D118 is a catalytic residue. Substrate is bound at residue K122. The interval 124–129 (RHEKRR) is interaction with RNA. Substrate-binding positions include D154 and 191 to 194 (TEYE).

This sequence belongs to the class I-like SAM-binding methyltransferase superfamily. TrmB family.

It carries out the reaction guanosine(46) in tRNA + S-adenosyl-L-methionine = N(7)-methylguanosine(46) in tRNA + S-adenosyl-L-homocysteine. It functions in the pathway tRNA modification; N(7)-methylguanine-tRNA biosynthesis. In terms of biological role, catalyzes the formation of N(7)-methylguanine at position 46 (m7G46) in tRNA. The chain is tRNA (guanine-N(7)-)-methyltransferase from Streptococcus gordonii (strain Challis / ATCC 35105 / BCRC 15272 / CH1 / DL1 / V288).